Here is a 165-residue protein sequence, read N- to C-terminus: Nucleotide-binding protein Ctha_0558 (165 aa).

The protein belongs to the YajQ family.

Functionally, nucleotide-binding protein. The sequence is that of Nucleotide-binding protein Ctha_0558 from Chloroherpeton thalassium (strain ATCC 35110 / GB-78).